A 93-amino-acid chain; its full sequence is MSETRTRAHVFVSGTVQGVFYRASTRDAARERGVRGWVRNLDDGRVEAVFEGPESAVDSLIEWCHTGSPDASVSDVSVSYTEPEGIDGFHIRR.

The Acylphosphatase-like domain maps to 7 to 93 (RAHVFVSGTV…EGIDGFHIRR (87 aa)). Active-site residues include R22 and N40.

This sequence belongs to the acylphosphatase family.

The catalysed reaction is an acyl phosphate + H2O = a carboxylate + phosphate + H(+). The chain is Acylphosphatase (acyP) from Haloquadratum walsbyi (strain DSM 16790 / HBSQ001).